The sequence spans 416 residues: Serine hydroxymethyltransferase (416 aa).

(6S)-5,6,7,8-tetrahydrofolate is bound by residues L121 and 125 to 127; that span reads GHL. K230 is modified (N6-(pyridoxal phosphate)lysine).

It belongs to the SHMT family. As to quaternary structure, homodimer. Requires pyridoxal 5'-phosphate as cofactor.

The protein resides in the cytoplasm. The enzyme catalyses (6R)-5,10-methylene-5,6,7,8-tetrahydrofolate + glycine + H2O = (6S)-5,6,7,8-tetrahydrofolate + L-serine. Its pathway is one-carbon metabolism; tetrahydrofolate interconversion. It functions in the pathway amino-acid biosynthesis; glycine biosynthesis; glycine from L-serine: step 1/1. In terms of biological role, catalyzes the reversible interconversion of serine and glycine with tetrahydrofolate (THF) serving as the one-carbon carrier. This reaction serves as the major source of one-carbon groups required for the biosynthesis of purines, thymidylate, methionine, and other important biomolecules. Also exhibits THF-independent aldolase activity toward beta-hydroxyamino acids, producing glycine and aldehydes, via a retro-aldol mechanism. In Nitrosomonas eutropha (strain DSM 101675 / C91 / Nm57), this protein is Serine hydroxymethyltransferase.